Reading from the N-terminus, the 658-residue chain is Cysteine-rich receptor-like protein kinase 36 (658 aa).

The signal sequence occupies residues 1–26; it reads MERSNLFHIPCFLLLFLLFNINGVHT. 2 Gnk2-homologous domains span residues 27 to 128 and 139 to 246; these read TFVC…NIHR and NVPH…DYRF. The Extracellular portion of the chain corresponds to 27-281; sequence TFVCGDEDFS…KKGRMFQPWS (255 aa). N-linked (GlcNAc...) asparagine glycans are attached at residues Asn-38, Asn-64, Asn-116, Asn-150, and Asn-163. A helical transmembrane segment spans residues 282–302; it reads VVVVVFPTGINLAVFVAFVLA. Topologically, residues 303-658 are cytoplasmic; the sequence is YRRMRRRIYT…EVSITVLYPR (356 aa). A Protein kinase domain is found at 340–612; that stretch reads FSLENKLGQG…ITWLARDGTF (273 aa). ATP-binding positions include 346 to 354 and Lys-368; that span reads LGQGGFGSV. Tyr-413 carries the post-translational modification Phosphotyrosine. Asp-465 (proton acceptor) is an active-site residue. Ser-469 carries the post-translational modification Phosphoserine. At Thr-505 the chain carries Phosphothreonine. Residue Tyr-513 is modified to Phosphotyrosine.

The protein belongs to the protein kinase superfamily. Ser/Thr protein kinase family. CRK subfamily. Interacts with CRK45. Post-translationally, autophosphorylated.

Its subcellular location is the cell membrane. The enzyme catalyses L-seryl-[protein] + ATP = O-phospho-L-seryl-[protein] + ADP + H(+). The catalysed reaction is L-threonyl-[protein] + ATP = O-phospho-L-threonyl-[protein] + ADP + H(+). Forms a complex with CRK45 that may negatively control abscisic acid (ABA) and osmotic stress signal transduction. Can phosphorylate CRK45 in vitro. This is Cysteine-rich receptor-like protein kinase 36 from Arabidopsis thaliana (Mouse-ear cress).